The primary structure comprises 243 residues: Pyridoxine 5'-phosphate synthase (243 aa).

Residue N9 coordinates 3-amino-2-oxopropyl phosphate. D11–H12 serves as a coordination point for 1-deoxy-D-xylulose 5-phosphate. R20 lines the 3-amino-2-oxopropyl phosphate pocket. H45 serves as the catalytic Proton acceptor. Positions 47 and 52 each coordinate 1-deoxy-D-xylulose 5-phosphate. The active-site Proton acceptor is the E72. T102 contacts 1-deoxy-D-xylulose 5-phosphate. The Proton donor role is filled by H193. 3-amino-2-oxopropyl phosphate-binding positions include G194 and G215 to H216.

The protein belongs to the PNP synthase family. Homooctamer; tetramer of dimers.

The protein localises to the cytoplasm. The catalysed reaction is 3-amino-2-oxopropyl phosphate + 1-deoxy-D-xylulose 5-phosphate = pyridoxine 5'-phosphate + phosphate + 2 H2O + H(+). The protein operates within cofactor biosynthesis; pyridoxine 5'-phosphate biosynthesis; pyridoxine 5'-phosphate from D-erythrose 4-phosphate: step 5/5. Its function is as follows. Catalyzes the complicated ring closure reaction between the two acyclic compounds 1-deoxy-D-xylulose-5-phosphate (DXP) and 3-amino-2-oxopropyl phosphate (1-amino-acetone-3-phosphate or AAP) to form pyridoxine 5'-phosphate (PNP) and inorganic phosphate. This Vibrio vulnificus (strain CMCP6) protein is Pyridoxine 5'-phosphate synthase.